A 520-amino-acid polypeptide reads, in one-letter code: Pleckstrin homology domain-containing family O member 1-A (520 aa).

4 disordered regions span residues 1 to 23 (MKKS…QPDK), 208 to 296 (SLDK…GHLQ), 313 to 439 (IQEQ…KSTD), and 497 to 520 (QARQ…QKSP). Residues 20–131 (QPDKVGWIRR…WINVLNTAIT (112 aa)) enclose the PH domain. A compositionally biased stretch (polar residues) spans 227–241 (PASNTEAQEKTSSLP). Composition is skewed to basic and acidic residues over residues 242 to 255 (RKSE…DHPR) and 333 to 347 (DSPR…DSPH). Low complexity predominate over residues 348–361 (SKGSSSPHSANSPS). Composition is skewed to basic and acidic residues over residues 363–385 (RAKD…DSPR) and 396–418 (KSID…DLTH). Positions 420 to 439 (KGSQSPLSTGSNSPHMKSTD) are enriched in polar residues. Residues 497 to 506 (QARQRREELS) are compositionally biased toward basic and acidic residues. The segment covering 509-520 (GMASQKLQQKSP) has biased composition (polar residues).

Post-translationally, C-terminal fragments could be released during apoptosis via caspase-3-dependent cleavage.

It is found in the membrane. The protein localises to the nucleus. Its subcellular location is the cytoplasm. Its function is as follows. Plays a role in the regulation of the actin cytoskeleton through its interactions with actin capping protein (CP). This is Pleckstrin homology domain-containing family O member 1-A (plekho1a) from Danio rerio (Zebrafish).